Consider the following 542-residue polypeptide: Valine N-monooxygenase 1 (542 aa).

Residues 1–21 lie on the Cytoplasmic side of the membrane; the sequence is MAMNVSTTIGLLNATSFASSS. Residues 22–42 traverse the membrane as a helical; Signal-anchor for type II membrane protein segment; the sequence is SINTVKILFVTLFISIVSTIV. The Lumenal segment spans residues 43–542; sequence KLQKSAANKE…LAPHLYPTSP (500 aa). The N-linked (GlcNAc...) asparagine glycan is linked to N278. A heme-binding site is contributed by C478. Residue N506 is glycosylated (N-linked (GlcNAc...) asparagine).

Belongs to the cytochrome P450 family. Heme is required as a cofactor. Expressed in the epidermis, the next two cortex cell layers, the endodermis and the pericycle of leaf petioles. Strong expression around the laticifers among the phloem cells and in parenchymatic cells between the protoxylem and the metaxylem cells. In the leaves, preferentially expressed in the mesophyll cells adjacent to the epidermis.

It is found in the microsome membrane. The catalysed reaction is L-valine + 2 reduced [NADPH--hemoprotein reductase] + 2 O2 = (E)-2-methylpropanal oxime + 2 oxidized [NADPH--hemoprotein reductase] + CO2 + 3 H2O + 2 H(+). It catalyses the reaction L-valine + reduced [NADPH--hemoprotein reductase] + O2 = N-hydroxy-L-valine + oxidized [NADPH--hemoprotein reductase] + H2O + 2 H(+). It carries out the reaction N-hydroxy-L-valine + reduced [NADPH--hemoprotein reductase] + O2 = N,N-dihydroxy-L-valine + oxidized [NADPH--hemoprotein reductase] + H2O + H(+). The enzyme catalyses L-isoleucine + 2 reduced [NADPH--hemoprotein reductase] + 2 O2 = (1E,2S)-2-methylbutanal oxime + 2 oxidized [NADPH--hemoprotein reductase] + CO2 + 3 H2O + 2 H(+). The catalysed reaction is L-isoleucine + reduced [NADPH--hemoprotein reductase] + O2 = N-hydroxy-L-isoleucine + oxidized [NADPH--hemoprotein reductase] + H2O + 2 H(+). It catalyses the reaction N-hydroxy-L-isoleucine + reduced [NADPH--hemoprotein reductase] + O2 = N,N-dihydroxy-L-isoleucine + oxidized [NADPH--hemoprotein reductase] + H2O + H(+). Its pathway is secondary metabolite biosynthesis. Its activity is regulated as follows. Inhibited by tetcyclasis but not by 1-aminobenzotriazole (ABT). Its function is as follows. Involved in the biosynthesis of the cyanogenic glucosides linamarin and lotaustralin. Can use L-valine or L-isoleucine as substrate, but not L-leucine, L-phenylalanine, L-tyrosine, D-valine or D-isoleucine. Catalyzes multi-step reactions starting with two successive N-hydroxylations using L-valine and L-isoleucine as substrates leading to the formation of N,N-dihydroxy-L-valine and N,N-dihydroxy-L-isoleucine, respectively; following spontaneous reactions lead to the production of (E)-2-methylpropanal oxime and (1E,2S)-2-methylbutanal oxime, respectively. This chain is Valine N-monooxygenase 1, found in Manihot esculenta (Cassava).